The primary structure comprises 214 residues: Cytochrome b (214 aa).

Helical transmembrane passes span 31–51 (FGSM…FLAI), 75–96 (WIMQ…YIHI), 111–131 (WLSG…GYVL), and 176–196 (FFAL…IHIL). H81 and H95 together coordinate heme b. Heme b contacts are provided by H180 and H194. H199 serves as a coordination point for a ubiquinone.

This sequence belongs to the cytochrome b family. As to quaternary structure, the cytochrome bc1 complex contains 3 respiratory subunits (MT-CYB, CYC1 and UQCRFS1), 2 core proteins (UQCRC1 and UQCRC2) and probably 6 low-molecular weight proteins. Heme b serves as cofactor.

It is found in the mitochondrion inner membrane. Component of the ubiquinol-cytochrome c reductase complex (complex III or cytochrome b-c1 complex) that is part of the mitochondrial respiratory chain. The b-c1 complex mediates electron transfer from ubiquinol to cytochrome c. Contributes to the generation of a proton gradient across the mitochondrial membrane that is then used for ATP synthesis. The chain is Cytochrome b (MT-CYB) from Agkistrodon contortrix contortrix (Southern copperhead).